Consider the following 952-residue polypeptide: Histone deacetylase 7 (952 aa).

Transcription repression stretches follow at residues 1-268 (MDLR…DSDR) and 218-546 (GPNP…EHAG). The segment at 49-149 (SMDTPMPELQ…LPSDPPEHFP (101 aa)) is interaction with MEF2A. A Phosphoserine modification is found at Ser109. Disordered regions lie at residues 130–224 (LSSF…PILG) and 261–283 (PARA…ILGS). Ser155 is modified (phosphoserine; by MARK2, MARK3 and PKD/PRKD1). The segment covering 167–181 (KSLERRKNPLLRKES) has biased composition (basic and acidic residues). Ser181 bears the Phosphoserine; by PKD/PRKD2 mark. Residues 197-212 (SSPSSSSTPASGCSSP) are compositionally biased toward low complexity. At Ser283 the chain carries Phosphoserine. At Thr286 the chain carries Phosphothreonine. 3 disordered regions span residues 349 to 377 (LHWP…MQPR), 389 to 441 (KRSA…GPAP), and 460 to 510 (LPRG…SSSE). Ser358 is subject to Phosphoserine; by PKD/PRKD1. Residues 360-374 (PLPPSATAPPPPGPM) show a composition bias toward pro residues. Phosphoserine is present on residues Ser364, Ser405, Ser486, Ser487, and Ser507. Residues 482–503 (SRAQSSPAAPASLSAPEPASQA) show a composition bias toward low complexity. The segment at 512-865 (PARTLPFTTG…VAALLGNRVD (354 aa)) is histone deacetylase. 3 residues coordinate Zn(2+): Cys533, Cys535, and His541. A Phosphoserine modification is found at Ser595. Cys618 contributes to the Zn(2+) binding site. His670 is an active-site residue. Residues 877 to 952 (NLNAIRSLEA…LVEEEEPMNL (76 aa)) form an interaction with SIN3A region. The short motif at 917–952 (KEEVEAVTALASLSVGILAEDRPSEQLVEEEEPMNL) is the Nuclear export signal element.

It belongs to the histone deacetylase family. HD type 2 subfamily. As to quaternary structure, interacts with HDAC1, HDAC2, HDAC3, HDAC4, HDAC5, NCOR1, NCOR2, SIN3A, SIN3B, RBBP4, RBBP7, MTA1L1, SAP30 and MBD3. Interacts with KAT5 and EDNRA. Interacts with the 14-3-3 protein YWHAE, MEF2A, MEF2B and MEF2C. Interacts with ZMYND15. Interacts with KDM5B. Interacts with PML. Interacts with FOXP3. Interacts with RARA. Post-translationally, may be phosphorylated by CaMK1. Phosphorylated by the PKC kinases PKN1 and PKN2, impairing nuclear import. Phosphorylation at Ser-155 by MARK2, MARK3 and PRKD1 promotes interaction with 14-3-3 proteins and export from the nucleus. Phosphorylation at Ser-155 is a prerequisite for phosphorylation at Ser-181.

The protein localises to the nucleus. It localises to the cytoplasm. The enzyme catalyses N(6)-acetyl-L-lysyl-[histone] + H2O = L-lysyl-[histone] + acetate. The catalysed reaction is N(6)-acetyl-L-lysyl-[protein] + H2O = L-lysyl-[protein] + acetate. Responsible for the deacetylation of lysine residues on the N-terminal part of the core histones (H2A, H2B, H3 and H4). Histone deacetylation gives a tag for epigenetic repression and plays an important role in transcriptional regulation, cell cycle progression and developmental events. Histone deacetylases act via the formation of large multiprotein complexes. Involved in muscle maturation by repressing transcription of myocyte enhancer factors such as MEF2A, MEF2B and MEF2C. During muscle differentiation, it shuttles into the cytoplasm, allowing the expression of myocyte enhancer factors. May be involved in Epstein-Barr virus (EBV) latency, possibly by repressing the viral BZLF1 gene. Positively regulates the transcriptional repressor activity of FOXP3. Serves as a corepressor of RARA, causing its deacetylation and inhibition of RARE DNA element binding. In association with RARA, plays a role in the repression of microRNA-10a and thereby in the inflammatory response. Also acetylates non-histone proteins, such as ALKBH5. The chain is Histone deacetylase 7 (HDAC7) from Homo sapiens (Human).